The following is a 356-amino-acid chain: GDP-mannose 4,6 dehydratase (356 aa).

NADP(+) is bound by residues 12–17 (GITGQD), 69–70 (DL), 91–95 (LGAQS), and Tyr106. Residue Thr138 is part of the active site. Active-site nucleophile residues include Glu140 and Tyr162. NADP(+) is bound by residues Lys166, His192, and Arg197.

This sequence belongs to the NAD(P)-dependent epimerase/dehydratase family. GDP-mannose 4,6-dehydratase subfamily. The cofactor is NADP(+).

It catalyses the reaction GDP-alpha-D-mannose = GDP-4-dehydro-alpha-D-rhamnose + H2O. It participates in nucleotide-sugar biosynthesis; GDP-L-fucose biosynthesis via de novo pathway; GDP-L-fucose from GDP-alpha-D-mannose: step 1/2. In terms of biological role, participates in the synthesis of GDP-L-fucose, catalyzing the conversion of GDP-D-mannose to GDP-4-dehydro-6-deoxy-D-mannose (GDP-4-dehydro-alpha-D-rhamnose) which is further catalyzed by GDP-L-fucose synthase (ger). GDP-L-fucose is important for the synthesis of fucosylated N-glycans which are expressed on the cell surface. The protein is GDP-mannose 4,6 dehydratase (gmd) of Dictyostelium discoideum (Social amoeba).